Here is a 258-residue protein sequence, read N- to C-terminus: Dehydrodolichyl diphosphate synthase complex subunit nus1 (258 aa).

The chain crosses the membrane as a helical span at residues 5–21; the sequence is IFFYLALWVIQSVYGAW.

It belongs to the UPP synthase family. In terms of assembly, forms an active dehydrodolichyl diphosphate synthase complex with SPAC4D7.04c. Requires Mg(2+) as cofactor.

Its subcellular location is the endoplasmic reticulum membrane. The enzyme catalyses n isopentenyl diphosphate + (2E,6E)-farnesyl diphosphate = a di-trans,poly-cis-polyprenyl diphosphate + n diphosphate. Its pathway is protein modification; protein glycosylation. Functionally, with SPAC4D7.04c, forms the dehydrodolichyl diphosphate synthase (DDS) complex, an essential component of the dolichol monophosphate (Dol-P) biosynthetic machinery. Adds multiple copies of isopentenyl pyrophosphate (IPP) to farnesyl pyrophosphate (FPP) to produce dehydrodolichyl diphosphate (Dedol-PP), a precursor of dolichol which is utilized as a sugar carrier in protein glycosylation in the endoplasmic reticulum (ER). This chain is Dehydrodolichyl diphosphate synthase complex subunit nus1 (nus1), found in Schizosaccharomyces pombe (strain 972 / ATCC 24843) (Fission yeast).